Reading from the N-terminus, the 219-residue chain is ATP-dependent Clp protease proteolytic subunit 1 (219 aa).

Serine 113 functions as the Nucleophile in the catalytic mechanism. The active site involves histidine 138.

This sequence belongs to the peptidase S14 family. Fourteen ClpP subunits assemble into 2 heptameric rings which stack back to back to give a disk-like structure with a central cavity, resembling the structure of eukaryotic proteasomes.

The protein resides in the cytoplasm. The catalysed reaction is Hydrolysis of proteins to small peptides in the presence of ATP and magnesium. alpha-casein is the usual test substrate. In the absence of ATP, only oligopeptides shorter than five residues are hydrolyzed (such as succinyl-Leu-Tyr-|-NHMec, and Leu-Tyr-Leu-|-Tyr-Trp, in which cleavage of the -Tyr-|-Leu- and -Tyr-|-Trp bonds also occurs).. Its function is as follows. Cleaves peptides in various proteins in a process that requires ATP hydrolysis. Has a chymotrypsin-like activity. Plays a major role in the degradation of misfolded proteins. Probably partially responsible for degradation of ECF sigma factor SigR prime. The polypeptide is ATP-dependent Clp protease proteolytic subunit 1 (Streptomyces coelicolor (strain ATCC BAA-471 / A3(2) / M145)).